Reading from the N-terminus, the 226-residue chain is Ribonuclease 3 (226 aa).

Positions 6–128 (INRLQRKLGY…LIGGVFLDSD (123 aa)) constitute an RNase III domain. Residue Glu-41 participates in Mg(2+) binding. Asp-45 is a catalytic residue. The Mg(2+) site is built by Asp-114 and Glu-117. Glu-117 is an active-site residue. One can recognise a DRBM domain in the interval 155–225 (DPKTRLQEFL…AEQALIKLEL (71 aa)).

This sequence belongs to the ribonuclease III family. As to quaternary structure, homodimer. Mg(2+) is required as a cofactor.

It localises to the cytoplasm. The enzyme catalyses Endonucleolytic cleavage to 5'-phosphomonoester.. Its function is as follows. Digests double-stranded RNA. Involved in the processing of primary rRNA transcript to yield the immediate precursors to the large and small rRNAs (23S and 16S). Processes some mRNAs, and tRNAs when they are encoded in the rRNA operon. Processes pre-crRNA and tracrRNA of type II CRISPR loci if present in the organism. This is Ribonuclease 3 from Serratia proteamaculans (strain 568).